The chain runs to 381 residues: Sulfate adenylyltransferase (381 aa).

It belongs to the sulfate adenylyltransferase family.

It catalyses the reaction sulfate + ATP + H(+) = adenosine 5'-phosphosulfate + diphosphate. It functions in the pathway sulfur metabolism; hydrogen sulfide biosynthesis; sulfite from sulfate: step 1/3. The protein is Sulfate adenylyltransferase of Carboxydothermus hydrogenoformans (strain ATCC BAA-161 / DSM 6008 / Z-2901).